A 342-amino-acid chain; its full sequence is tRNA N6-adenosine threonylcarbamoyltransferase (342 aa).

Positions 111 and 115 each coordinate Fe cation. Residues L134–G138, D167, G180, and N277 contribute to the substrate site. Residue D305 participates in Fe cation binding.

Belongs to the KAE1 / TsaD family. The cofactor is Fe(2+).

Its subcellular location is the cytoplasm. It carries out the reaction L-threonylcarbamoyladenylate + adenosine(37) in tRNA = N(6)-L-threonylcarbamoyladenosine(37) in tRNA + AMP + H(+). Required for the formation of a threonylcarbamoyl group on adenosine at position 37 (t(6)A37) in tRNAs that read codons beginning with adenine. Is involved in the transfer of the threonylcarbamoyl moiety of threonylcarbamoyl-AMP (TC-AMP) to the N6 group of A37, together with TsaE and TsaB. TsaD likely plays a direct catalytic role in this reaction. This Histophilus somni (strain 2336) (Haemophilus somnus) protein is tRNA N6-adenosine threonylcarbamoyltransferase.